Here is a 224-residue protein sequence, read N- to C-terminus: MVQCLVVDDDPRILNYIASHLQTEHIDAYTQPSGEAALKLLEKQRVDIAVVDIMMDGMDGFQLCNTLKNDYDIPVIMLTARDALSDKERAFISGTDDYVTKPFEVKELIFRIRAVLRRYNINSNSEMTIGNLTLNQSYLELQVSNKTMTLPNKEFQLLFMLAARPKQIFTREQIIEKIWGYDYEGDERTVDVHIKRLRQRLKKLNATLTIETVRGQGYKVENHV.

Residues Gln3–Leu116 form the Response regulatory domain. At Asp52 the chain carries 4-aspartylphosphate. Positions Asn124 to Asn222 form a DNA-binding region, ompR/PhoB-type.

In terms of processing, phosphorylated by HssS.

It localises to the cytoplasm. Member of the two-component regulatory system HssS/HssR involved in intracellular heme homeostasis and tempering of staphylococcal virulence. Phosphorylated HssR binds to a direct repeat sequence within hrtAB promoter and activates the expression of hrtAB, an efflux pump, in response to extracellular heme, hemin, hemoglobin or blood. The sequence is that of Heme response regulator HssR (hssR) from Staphylococcus aureus (strain Mu50 / ATCC 700699).